A 401-amino-acid polypeptide reads, in one-letter code: Heat stress transcription factor A-4a (401 aa).

The DNA-binding element occupies 13–107 (LPPFLTKTYE…LMKNIHRRKP (95 aa)). The segment at 122 to 188 (PLTDSERVRM…TMVSFVSQVL (67 aa)) is hydrophobic repeat HR-A/B. The Nuclear localization signal motif lies at 207-213 (RKRRFPR). The AHA1 motif lies at 256–265 (IAIWENLVSD). The AHA2 motif lies at 341 to 350 (DGFWQQFFSE). Residues 351-373 (NPGSTEQREVQLERKDDKDKAGV) form a disordered region. Residues 356-373 (EQREVQLERKDDKDKAGV) are compositionally biased toward basic and acidic residues. Positions 388-395 (ITEQLGHL) match the Nuclear export signal motif.

It belongs to the HSF family. Class A subfamily. In terms of assembly, homotrimer. Post-translationally, exhibits temperature-dependent phosphorylation.

The protein resides in the cytoplasm. It localises to the nucleus. Its function is as follows. Transcriptional activator that specifically binds DNA sequence 5'-AGAAnnTTCT-3' known as heat shock promoter elements (HSE). This is Heat stress transcription factor A-4a (HSFA4A) from Arabidopsis thaliana (Mouse-ear cress).